The chain runs to 432 residues: Sensor histidine kinase YrkQ (432 aa).

Over 1–12 the chain is Cytoplasmic; that stretch reads MAHLKFTLTKKL. A helical membrane pass occupies residues 13-33; the sequence is ALLIMVAAIVSGVIFLTLQKI. Residues 34–145 are Extracellular-facing; it reads TDDLIEGYLS…GFYSSRYYDL (112 aa). A helical transmembrane segment spans residues 146-166; the sequence is AFALDLLGATLIFLIIVLFGI. Residues 167 to 219 form the HAMP domain; sequence RQSLRYLKTIHQEIHILEGGELDYEMTIKGHDELAMIAKSIEDLRKAFLDKLK. At 167 to 432 the chain is on the cytoplasmic side; that stretch reads RQSLRYLKTI…IVLRFWNTKM (266 aa). Residues 234 to 432 form the Histidine kinase domain; the sequence is EMSHDMRTPL…IVLRFWNTKM (199 aa). Position 237 is a phosphohistidine; by autocatalysis (His-237).

Its subcellular location is the cell membrane. The catalysed reaction is ATP + protein L-histidine = ADP + protein N-phospho-L-histidine.. Member of the two-component regulatory system YrkQ/YrkP. Probably activates YrkP by phosphorylation. In Bacillus subtilis (strain 168), this protein is Sensor histidine kinase YrkQ (yrkQ).